We begin with the raw amino-acid sequence, 684 residues long: Hydroxyproline O-galactosyltransferase GALT2 (684 aa).

The Cytoplasmic segment spans residues 1 to 22; sequence MKRVKSESFRGVYSSRRFKLSH. The chain crosses the membrane as a helical; Signal-anchor for type II membrane protein span at residues 23–43; the sequence is FLLAIAGFYLVFLAFKFPHFI. The Lumenal segment spans residues 44–684; the sequence is EMVAMLSGDT…KGRPQCCNFR (641 aa). Positions 80 to 102 are disordered; the sequence is KLEDEDHQSGPSTTQKVSPEEKI. Asn103, Asn127, and Asn162 each carry an N-linked (GlcNAc...) asparagine glycan. The Galectin domain occupies 191-405; the sequence is RIMLLPCGLA…DVDIHSIHAT (215 aa). Residues Asn524 and Asn632 are each glycosylated (N-linked (GlcNAc...) asparagine).

This sequence belongs to the glycosyltransferase 31 family. Requires Mn(2+) as cofactor. In terms of tissue distribution, expressed in stems and at lower levels in cauline leaves and siliques.

It is found in the golgi apparatus membrane. It participates in protein modification; protein glycosylation. Functionally, possesses hydroxyproline O-galactosyltransferase activity. Transfers galactose from UDP-galactose to hydroxyproline residues in the arabinogalactan proteins (AGPs). Is specific for AGPs containing non-contiguous peptidyl hydroxyproline residues. Utilizes UDP-galactose solely as sugar donor. The addition of galactose onto the peptidyl hydroxyproline residues in AGP core proteins represents the first committed step in arabinogalactan polysaccharide addition. AGP glycans play essential roles in both vegetative and reproductive plant growth. In Arabidopsis thaliana (Mouse-ear cress), this protein is Hydroxyproline O-galactosyltransferase GALT2.